Here is a 598-residue protein sequence, read N- to C-terminus: Aspartate--tRNA(Asp/Asn) ligase (598 aa).

Glu182 provides a ligand contact to L-aspartate. The tract at residues 206–209 (QIFK) is aspartate. Residue Arg228 participates in L-aspartate binding. Residues 228–230 (RDE) and Gln237 contribute to the ATP site. His456 is a binding site for L-aspartate. Glu490 contributes to the ATP binding site. Residue Arg497 coordinates L-aspartate. Position 542–545 (542–545 (GLDR)) interacts with ATP.

Belongs to the class-II aminoacyl-tRNA synthetase family. Type 1 subfamily. Homodimer.

Its subcellular location is the cytoplasm. It carries out the reaction tRNA(Asx) + L-aspartate + ATP = L-aspartyl-tRNA(Asx) + AMP + diphosphate. Its function is as follows. Aspartyl-tRNA synthetase with relaxed tRNA specificity since it is able to aspartylate not only its cognate tRNA(Asp) but also tRNA(Asn). Reaction proceeds in two steps: L-aspartate is first activated by ATP to form Asp-AMP and then transferred to the acceptor end of tRNA(Asp/Asn). The chain is Aspartate--tRNA(Asp/Asn) ligase from Lachnoclostridium phytofermentans (strain ATCC 700394 / DSM 18823 / ISDg) (Clostridium phytofermentans).